Reading from the N-terminus, the 427-residue chain is Trigger factor (427 aa).

The PPIase FKBP-type domain maps to 163 to 248 (GDTVVIDFVG…IHEVKTKEVP (86 aa)).

Belongs to the FKBP-type PPIase family. Tig subfamily.

It localises to the cytoplasm. It carries out the reaction [protein]-peptidylproline (omega=180) = [protein]-peptidylproline (omega=0). Functionally, involved in protein export. Acts as a chaperone by maintaining the newly synthesized protein in an open conformation. Functions as a peptidyl-prolyl cis-trans isomerase. The protein is Trigger factor of Streptococcus pyogenes serotype M18 (strain MGAS8232).